The chain runs to 290 residues: uncharacterized protein (290 aa).

The stretch at 161–216 (SNQREVESLEQLVHEQLNKLNTESKMEFENRKNDTKNEVQQLSARIVELHNLLAVS) forms a coiled coil. A helical transmembrane segment spans residues 236 to 256 (AGVVMAFTGFLVLVIPFGLGV).

Its subcellular location is the mitochondrion membrane. This is an uncharacterized protein from Schizosaccharomyces pombe (strain 972 / ATCC 24843) (Fission yeast).